The chain runs to 207 residues: Thiamine-phosphate synthase (207 aa).

Residues 35-39 (QYRDK) and asparagine 67 each bind 4-amino-2-methyl-5-(diphosphooxymethyl)pyrimidine. Mg(2+) contacts are provided by aspartate 68 and aspartate 86. Position 105 (threonine 105) interacts with 4-amino-2-methyl-5-(diphosphooxymethyl)pyrimidine. 132 to 134 (SVT) serves as a coordination point for 2-[(2R,5Z)-2-carboxy-4-methylthiazol-5(2H)-ylidene]ethyl phosphate. Lysine 135 contacts 4-amino-2-methyl-5-(diphosphooxymethyl)pyrimidine. Residue glycine 162 coordinates 2-[(2R,5Z)-2-carboxy-4-methylthiazol-5(2H)-ylidene]ethyl phosphate.

The protein belongs to the thiamine-phosphate synthase family. The cofactor is Mg(2+).

The enzyme catalyses 2-[(2R,5Z)-2-carboxy-4-methylthiazol-5(2H)-ylidene]ethyl phosphate + 4-amino-2-methyl-5-(diphosphooxymethyl)pyrimidine + 2 H(+) = thiamine phosphate + CO2 + diphosphate. It catalyses the reaction 2-(2-carboxy-4-methylthiazol-5-yl)ethyl phosphate + 4-amino-2-methyl-5-(diphosphooxymethyl)pyrimidine + 2 H(+) = thiamine phosphate + CO2 + diphosphate. It carries out the reaction 4-methyl-5-(2-phosphooxyethyl)-thiazole + 4-amino-2-methyl-5-(diphosphooxymethyl)pyrimidine + H(+) = thiamine phosphate + diphosphate. It participates in cofactor biosynthesis; thiamine diphosphate biosynthesis; thiamine phosphate from 4-amino-2-methyl-5-diphosphomethylpyrimidine and 4-methyl-5-(2-phosphoethyl)-thiazole: step 1/1. In terms of biological role, condenses 4-methyl-5-(beta-hydroxyethyl)thiazole monophosphate (THZ-P) and 2-methyl-4-amino-5-hydroxymethyl pyrimidine pyrophosphate (HMP-PP) to form thiamine monophosphate (TMP). This Pseudomonas putida (strain ATCC 47054 / DSM 6125 / CFBP 8728 / NCIMB 11950 / KT2440) protein is Thiamine-phosphate synthase.